Consider the following 196-residue polypeptide: uncharacterized protein (196 aa).

The protein belongs to the CDP-alcohol phosphatidyltransferase class-I family.

This is an uncharacterized protein from Aquifex aeolicus (strain VF5).